Reading from the N-terminus, the 476-residue chain is Glycogen synthase (476 aa).

Residue Lys15 participates in ADP-alpha-D-glucose binding.

Belongs to the glycosyltransferase 1 family. Bacterial/plant glycogen synthase subfamily.

It catalyses the reaction [(1-&gt;4)-alpha-D-glucosyl](n) + ADP-alpha-D-glucose = [(1-&gt;4)-alpha-D-glucosyl](n+1) + ADP + H(+). The protein operates within glycan biosynthesis; glycogen biosynthesis. Its function is as follows. Synthesizes alpha-1,4-glucan chains using ADP-glucose. The chain is Glycogen synthase from Bacillus cereus (strain Q1).